The sequence spans 740 residues: Homeobox protein 4 (740 aa).

Polar residues predominate over residues 1–13; that stretch reads MNTVEENNTKITD. Disordered regions lie at residues 1–41 and 179–491; these read MNTV…ENLS and NNNN…NNEI. Composition is skewed to low complexity over residues 14–34, 179–241, 251–288, and 303–316; these read NNNN…NNKN, NNNN…PQQN, NNNN…NNNN, and STTD…SVPS. Residues 254–287 adopt a coiled-coil conformation; it reads NINNNNINKNNNNYNNNNNNKNNNNNNNNNNNNN. The segment covering 317 to 328 has biased composition (basic residues); that stretch reads NKKKSSKTKQKS. Residues 339-363 are compositionally biased toward polar residues; that stretch reads HKSNYHQQPNQNSQHLQSKPNSPIL. Composition is skewed to low complexity over residues 365–390 and 397–491; these read SSPL…SPPQ and NNNF…NNEI. Positions 472–500 form a coiled coil; sequence NTNTNNNNNKNNNNNNNNEIENNNNEELI. The homeobox DNA-binding region spans 605–667; sequence RPKKGAKLSK…NTRRRKVPTL (63 aa). Residues 686–722 are compositionally biased toward low complexity; sequence NNNNNNGGNSNFKNNNNNTITTTSTSNNNNNNNNNNH. Residues 686 to 740 are disordered; it reads NNNNNNGGNSNFKNNNNNTITTTSTSNNNNNNNNNNHNEMECDDGENEESSEYDD. Residues 726–740 are compositionally biased toward acidic residues; that stretch reads ECDDGENEESSEYDD.

The protein resides in the nucleus. Its function is as follows. Putative transcription factor. This chain is Homeobox protein 4 (hbx4), found in Dictyostelium discoideum (Social amoeba).